The chain runs to 309 residues: Enoyl-CoA hydratase 2, peroxisomal (309 aa).

Residues 95–96, Lys124, 208–213, Gly231, and Phe261 contribute to the substrate site; these read HG and DYNPLH. Residues 183 to 295 form the MaoC-like domain; sequence PQRQPLTVCE…TKVKERNKTV (113 aa). The Microbody targeting signal motif lies at 307 to 309; it reads SSL.

In terms of tissue distribution, ubiquitous.

It localises to the peroxisome. It carries out the reaction a (3R)-3-hydroxyacyl-CoA = a (2E)-enoyl-CoA + H2O. It participates in lipid metabolism; fatty acid beta-oxidation. Bidirectional monofunctional enoyl-CoA hydratase 2 involved in the degradation of even cis-unsaturated fatty acids. Devoid of 3-hydroxyacyl-CoA dehydrogenase activity. This Arabidopsis thaliana (Mouse-ear cress) protein is Enoyl-CoA hydratase 2, peroxisomal (ECH2).